Here is a 521-residue protein sequence, read N- to C-terminus: Protein nucleotidyltransferase YdiU (521 aa).

Residues Gly109, Gly111, Arg112, Lys131, Asp143, Gly144, Arg194, and Arg201 each coordinate ATP. The Proton acceptor role is filled by Asp270. Mg(2+)-binding residues include Asn271 and Asp280. Asp280 is an ATP binding site.

The protein belongs to the SELO family. Requires Mg(2+) as cofactor. Mn(2+) is required as a cofactor.

The catalysed reaction is L-seryl-[protein] + ATP = 3-O-(5'-adenylyl)-L-seryl-[protein] + diphosphate. The enzyme catalyses L-threonyl-[protein] + ATP = 3-O-(5'-adenylyl)-L-threonyl-[protein] + diphosphate. It carries out the reaction L-tyrosyl-[protein] + ATP = O-(5'-adenylyl)-L-tyrosyl-[protein] + diphosphate. It catalyses the reaction L-histidyl-[protein] + UTP = N(tele)-(5'-uridylyl)-L-histidyl-[protein] + diphosphate. The catalysed reaction is L-seryl-[protein] + UTP = O-(5'-uridylyl)-L-seryl-[protein] + diphosphate. The enzyme catalyses L-tyrosyl-[protein] + UTP = O-(5'-uridylyl)-L-tyrosyl-[protein] + diphosphate. In terms of biological role, nucleotidyltransferase involved in the post-translational modification of proteins. It can catalyze the addition of adenosine monophosphate (AMP) or uridine monophosphate (UMP) to a protein, resulting in modifications known as AMPylation and UMPylation. This chain is Protein nucleotidyltransferase YdiU, found in Burkholderia mallei (strain ATCC 23344).